A 147-amino-acid chain; its full sequence is Protein Turandot Z (147 aa).

Residues 1–23 (MYFAIRLSFVLAVLICLTGNGSA) form the signal peptide.

This sequence belongs to the Turandot family.

It is found in the secreted. A humoral factor that may play a role in stress tolerance. In Drosophila melanogaster (Fruit fly), this protein is Protein Turandot Z.